Reading from the N-terminus, the 60-residue chain is MENNKTSYSWLGKFTTVKQECPTCGNESPEYLKECPHCGGLKCNHCDMGDDTACMNCEGE.

It localises to the host cytoplasm. This is an uncharacterized protein from Escherichia phage Mu (Bacteriophage Mu).